Reading from the N-terminus, the 557-residue chain is D-arabinono-1,4-lactone oxidase (557 aa).

An FAD-binding PCMH-type domain is found at 25-209; the sequence is FLCKPQAIFQ…THVTLRTCPK (185 aa). FAD contacts are provided by residues 58 to 61, 62 to 63, 144 to 148, isoleucine 199, and 543 to 546; these read VGSG, HS, ISTGT, and LSGK. Histidine 62 carries the pros-8alpha-FAD histidine modification.

This sequence belongs to the oxygen-dependent FAD-linked oxidoreductase family. Requires FAD as cofactor.

The enzyme catalyses D-arabinono-1,4-lactone + O2 = dehydro-D-arabinono-1,4-lactone + H2O2 + H(+). It catalyses the reaction L-galactono-1,4-lactone + O2 = L-ascorbate + H2O2 + H(+). The catalysed reaction is L-gulono-1,4-lactone + O2 = L-ascorbate + H2O2 + H(+). It carries out the reaction L-xylono-1,4-lactone + O2 = dehydro-L-arabinono-1,4-lactone + H2O2 + H(+). Its pathway is cofactor biosynthesis; D-erythroascorbate biosynthesis; dehydro-D-arabinono-1,4-lactone from D-arabinose: step 2/2. In terms of biological role, D-arabinono-1,4-lactone oxidase that catalyzes the final step of biosynthesis of D-erythroascorbic acid, an important antioxidant and one of the virulence factors enhancing the pathogenicity. Is also able to oxidize L-galactono-1,4-lactone, L-xylono-1,4-lactone and L-gulono-1,4-lactone. This Candida albicans (strain SC5314 / ATCC MYA-2876) (Yeast) protein is D-arabinono-1,4-lactone oxidase.